A 343-amino-acid chain; its full sequence is Large ribosomal subunit protein uL3 (343 aa).

Disordered stretches follow at residues 1 to 31 (MGHR…TPRS) and 238 to 262 (KGSR…PGQM).

Belongs to the universal ribosomal protein uL3 family. As to quaternary structure, part of the 50S ribosomal subunit. Forms a cluster with proteins L14 and L24e.

One of the primary rRNA binding proteins, it binds directly near the 3'-end of the 23S rRNA, where it nucleates assembly of the 50S subunit. The protein is Large ribosomal subunit protein uL3 of Sulfurisphaera tokodaii (strain DSM 16993 / JCM 10545 / NBRC 100140 / 7) (Sulfolobus tokodaii).